A 449-amino-acid chain; its full sequence is Mycosin-1 (449 aa).

Positions 1-23 are cleaved as a signal peptide; the sequence is MQRVAVMVLAVLLALFSAPPAWA. A disulfide bond links Cys51 and Cys120. One can recognise a Peptidase S8 domain in the interval 66 to 389; the sequence is PWANDYLRIQ…AGVIDPVAAL (324 aa). Catalysis depends on charge relay system residues Asp92 and His123. 2 disordered regions span residues 160–179 and 240–259; these read FQPKGARQDPNDPNTTQTAG and TGQDCSQNPPPDPSVPSDPR. A compositionally biased stretch (polar residues) spans 170–179; it reads NDPNTTQTAG. Cys206 and Cys244 are oxidised to a cystine. Ser334 acts as the Charge relay system in catalysis. A helical membrane pass occupies residues 421-441; sequence ITAVVIAGATLAFALGIGALA.

Belongs to the peptidase S8 family.

It localises to the cell membrane. Its function is as follows. May play a dual role in regulation of ESX-1 secretion and virulence. Acts as a protease that cleaves EspB. This Mycolicibacterium smegmatis (strain ATCC 700084 / mc(2)155) (Mycobacterium smegmatis) protein is Mycosin-1.